Here is a 1324-residue protein sequence, read N- to C-terminus: Ubiquitin carboxyl-terminal hydrolase 42 (1324 aa).

Disordered regions lie at residues 1–38 (MTIVDKASESSDPSAYQNQPGSSEAVSPGDMDAGSASW) and 63–87 (YSSSSVPDKSKPSPQKDQALGDGIA). Residues 10–25 (SSDPSAYQNQPGSSEA) are compositionally biased toward polar residues. Positions 63 to 80 (YSSSSVPDKSKPSPQKDQ) are enriched in low complexity. Phosphoserine is present on serine 75. In terms of domain architecture, USP spans 111 to 412 (AGLQNLGNTC…QAYVLFYIRS (302 aa)). The active-site Nucleophile is the cysteine 120. Catalysis depends on histidine 371, which acts as the Proton acceptor. 6 disordered regions span residues 452-494 (IGPQ…NRAS), 536-707 (QSQP…MPAP), 722-1026 (LSNK…RHRS), 1085-1131 (RAGL…HPDR), 1149-1254 (DRFH…VKDS), and 1275-1294 (GGFPLSGGPPLEGVGPFREK). Residues 477–489 (PSSSMSSPNGNSS) are compositionally biased toward low complexity. Serine 483 carries the phosphoserine modification. Over residues 536–564 (QSQPNLHSNSLENPTKPVPSSTITNSAVQ) the composition is skewed to polar residues. Positions 565–576 (STSNASTMSVSS) are enriched in low complexity. The span at 586–603 (ESCSQPVMNGKSKLNSSV) shows a compositional bias: polar residues. Phosphoserine occurs at positions 754 and 856. 5 stretches are compositionally biased toward basic and acidic residues: residues 938 to 974 (AKEKIGSLRKVDRGHYRSRRERSSSGEPARESRSKTE), 984 to 1013 (CPRERDRQDRHAPEHHPGHGDRLSPGERRS), 1101 to 1113 (RGCEPARERERHR), 1149 to 1158 (DRFHEHENGK), and 1165 to 1191 (DSVENSDSHVEKKARRSEQKDPLEEPK). Position 1181 is a phosphoserine (serine 1181). A compositionally biased stretch (basic residues) spans 1192 to 1206 (AKKHKKSKKKKKSKD). Basic and acidic residues predominate over residues 1207-1218 (KHRDRDSRHQQD). Phosphoserine is present on residues serine 1219, serine 1222, and serine 1226. Over residues 1231 to 1245 (HRHKKKKKKKKRHSR) the composition is skewed to basic residues. Serine 1247 carries the post-translational modification Phosphoserine.

The protein belongs to the peptidase C19 family. As to expression, broadly expressed.

It catalyses the reaction Thiol-dependent hydrolysis of ester, thioester, amide, peptide and isopeptide bonds formed by the C-terminal Gly of ubiquitin (a 76-residue protein attached to proteins as an intracellular targeting signal).. Its function is as follows. Deubiquitinating enzyme which may play an important role during spermatogenesis. The sequence is that of Ubiquitin carboxyl-terminal hydrolase 42 (USP42) from Homo sapiens (Human).